Here is a 92-residue protein sequence, read N- to C-terminus: Protein LSO2 (92 aa).

2 stretches are compositionally biased toward basic and acidic residues: residues 1 to 10 (MGKRFSESAA) and 38 to 72 (EASK…ERDA). Positions 1 to 92 (MGKRFSESAA…KGGKGKRKMK (92 aa)) are disordered. The stretch at 17–80 (ARKRDQAHAK…DALLTAEEEQ (64 aa)) forms a coiled coil.

The protein belongs to the CCDC124 family. In terms of assembly, associates with translationally inactive ribosomes in the nonrotated state. LSO2 bridges the decoding sites of the small with the GTPase activating center (GAC) of the large subunit. This position allows accommodation of the DOM34-dependent ribosome recycling system, which splits LSO2-containing ribosomes.

The protein resides in the nucleus. It localises to the cytoplasm. In terms of biological role, ribosome-binding protein involved in ribosome hibernation by associating with translationally inactive ribosomes. Required for translational recovery after starvation from stationary phase. May facilitate rapid translation reactivation by stabilizing the recycling-competent state of inactive ribosomes. The protein is Protein LSO2 of Saccharomyces cerevisiae (strain ATCC 204508 / S288c) (Baker's yeast).